Here is a 311-residue protein sequence, read N- to C-terminus: Coproporphyrin III ferrochelatase (311 aa).

Fe-coproporphyrin III is bound by residues Tyr-12, Arg-29, 45–46 (RY), Ser-53, and Tyr-124. Fe(2+) contacts are provided by His-182 and Glu-263.

Belongs to the ferrochelatase family.

The protein localises to the cytoplasm. It carries out the reaction Fe-coproporphyrin III + 2 H(+) = coproporphyrin III + Fe(2+). The protein operates within porphyrin-containing compound metabolism; protoheme biosynthesis. Involved in coproporphyrin-dependent heme b biosynthesis. Catalyzes the insertion of ferrous iron into coproporphyrin III to form Fe-coproporphyrin III. In Bacillus mycoides (strain KBAB4) (Bacillus weihenstephanensis), this protein is Coproporphyrin III ferrochelatase.